Reading from the N-terminus, the 344-residue chain is Glycerol-3-phosphate dehydrogenase [NAD(P)+] (344 aa).

NADPH is bound by residues Ser18, Tyr19, His39, and Lys113. Sn-glycerol 3-phosphate-binding residues include Lys113, Gly142, and Thr144. Residue Ala146 participates in NADPH binding. 5 residues coordinate sn-glycerol 3-phosphate: Lys198, Asp251, Ser261, Arg262, and Asn263. The Proton acceptor role is filled by Lys198. Arg262 is an NADPH binding site. Positions 286 and 288 each coordinate NADPH.

Belongs to the NAD-dependent glycerol-3-phosphate dehydrogenase family.

The protein localises to the cytoplasm. The catalysed reaction is sn-glycerol 3-phosphate + NAD(+) = dihydroxyacetone phosphate + NADH + H(+). It catalyses the reaction sn-glycerol 3-phosphate + NADP(+) = dihydroxyacetone phosphate + NADPH + H(+). It functions in the pathway membrane lipid metabolism; glycerophospholipid metabolism. Catalyzes the reduction of the glycolytic intermediate dihydroxyacetone phosphate (DHAP) to sn-glycerol 3-phosphate (G3P), the key precursor for phospholipid synthesis. This is Glycerol-3-phosphate dehydrogenase [NAD(P)+] from Blochmanniella pennsylvanica (strain BPEN).